A 209-amino-acid polypeptide reads, in one-letter code: J domain-containing protein spf31 (209 aa).

The region spanning 31-96 (NAYDVLDILP…KIRESLDSAY (66 aa)) is the J domain. Disordered stretches follow at residues 149–175 (ANQQ…EKVW) and 187–209 (QDFL…RVLG). Over residues 154 to 175 (EQARQDEIARERKRRVESEKVW) the composition is skewed to basic and acidic residues. Basic residues predominate over residues 192 to 209 (KTKKNNLKKKNKKPRVLG).

This chain is J domain-containing protein spf31 (spf31), found in Schizosaccharomyces pombe (strain 972 / ATCC 24843) (Fission yeast).